The sequence spans 192 residues: MTEQTIDNILPASKNNVKQWYVVHTASGAEKRIKEDILRKIAKQKMTDFFEDILIPVFGVSEVKRGKNVKVEKKLMPSYILIKMNMTDKSWHLVKNISGVTGFLGSKIVPKALTESEIQNIFNNLEAEAKVAKNSKLYEVGEVVTVTDGPFETFMGTVEEIDKERNRLKVSVSIFGKATPIELNFNQVKKND.

The 29-residue stretch at 140–168 folds into the KOW domain; the sequence is VGEVVTVTDGPFETFMGTVEEIDKERNRL.

Belongs to the NusG family.

In terms of biological role, participates in transcription elongation, termination and antitermination. In Rickettsia typhi (strain ATCC VR-144 / Wilmington), this protein is Transcription termination/antitermination protein NusG.